The sequence spans 591 residues: Aspartate--tRNA ligase (591 aa).

E173 is an L-aspartate binding site. The aspartate stretch occupies residues 197-200 (QLFK). R219 contacts L-aspartate. ATP is bound by residues 219 to 221 (RDE) and Q228. Position 446 (H446) interacts with L-aspartate. ATP is bound at residue E482. R489 provides a ligand contact to L-aspartate. 534 to 537 (GLDR) is an ATP binding site.

This sequence belongs to the class-II aminoacyl-tRNA synthetase family. Type 1 subfamily. As to quaternary structure, homodimer.

The protein localises to the cytoplasm. The catalysed reaction is tRNA(Asp) + L-aspartate + ATP = L-aspartyl-tRNA(Asp) + AMP + diphosphate. Catalyzes the attachment of L-aspartate to tRNA(Asp) in a two-step reaction: L-aspartate is first activated by ATP to form Asp-AMP and then transferred to the acceptor end of tRNA(Asp). This Limosilactobacillus fermentum (strain NBRC 3956 / LMG 18251) (Lactobacillus fermentum) protein is Aspartate--tRNA ligase.